The sequence spans 467 residues: Argininosuccinate lyase 1 (467 aa).

This sequence belongs to the lyase 1 family. Argininosuccinate lyase subfamily.

Its subcellular location is the cytoplasm. The enzyme catalyses 2-(N(omega)-L-arginino)succinate = fumarate + L-arginine. It functions in the pathway amino-acid biosynthesis; L-arginine biosynthesis; L-arginine from L-ornithine and carbamoyl phosphate: step 3/3. In Rhizobium meliloti (strain 1021) (Ensifer meliloti), this protein is Argininosuccinate lyase 1.